Reading from the N-terminus, the 720-residue chain is Dedicator of cytokinesis protein 9 (720 aa).

Residues 186–638 (KSYASTPELR…LSDIIVPRIC (453 aa)) form the DOCKER domain. Residues 277–638 (DEEASMMEDV…LSDIIVPRIC (362 aa)) form an interaction with CDC42 region.

Belongs to the DOCK family. As to quaternary structure, homodimer. Interacts preferentially with nucleotide-depleted CDC42.

The protein localises to the endomembrane system. Its function is as follows. Guanine nucleotide-exchange factor (GEF) that activates CDC42 by exchanging bound GDP for free GTP. Overexpression induces filopodia formation. This chain is Dedicator of cytokinesis protein 9 (Dock9), found in Rattus norvegicus (Rat).